Consider the following 162-residue polypeptide: Large ribosomal subunit protein uL15 (162 aa).

The segment covering 1–10 (MNLNELRDNA) has biased composition (basic and acidic residues). The interval 1–39 (MNLNELRDNAGSRYRKKRLGRGIGSGKGKTSGKGVKGQK) is disordered. A compositionally biased stretch (gly residues) spans 21 to 35 (RGIGSGKGKTSGKGV).

It belongs to the universal ribosomal protein uL15 family. As to quaternary structure, part of the 50S ribosomal subunit.

Functionally, binds to the 23S rRNA. The polypeptide is Large ribosomal subunit protein uL15 (Gluconacetobacter diazotrophicus (strain ATCC 49037 / DSM 5601 / CCUG 37298 / CIP 103539 / LMG 7603 / PAl5)).